The primary structure comprises 571 residues: Origin recognition complex subunit 5 (571 aa).

Disordered stretches follow at residues 90 to 142 (DDEY…YDDD) and 404 to 430 (QIYPPQQVPQQQKQQEKEKEKEKGRQL). Composition is skewed to low complexity over residues 107–133 (NNNNNNNNNNNNNNNNNNNNNNNNNND) and 407–416 (PPQQVPQQQK). Basic and acidic residues predominate over residues 417-428 (QQEKEKEKEKGR).

This sequence belongs to the ORC1 family. ORC is composed of six subunits.

Its subcellular location is the nucleus. Functionally, component of the origin recognition complex (ORC) that binds origins of replication. DNA-binding is ATP-dependent, however specific DNA sequences that define origins of replication have not been identified so far. ORC is required to assemble the pre-replication complex necessary to initiate DNA replication. The chain is Origin recognition complex subunit 5 (orcE) from Dictyostelium discoideum (Social amoeba).